The primary structure comprises 172 residues: MPLLDSFTVDHTRMNAPAVRVAKTMQTPKGDTITVFDLRFTAPNKDILSERGIHTLEHLYAGFMRAHLNGSAVEIIDISPMGCRTGFYMSLIGTPSEQQVAEAWLAAMQDVLKVENQNKIPELNEYQCGTAAMHSLDEAKEIANAIIAAGISVNKNDELALPESMLQELKID.

The Fe cation site is built by His-54, His-58, and Cys-128.

The protein belongs to the LuxS family. As to quaternary structure, homodimer. Fe cation is required as a cofactor.

The catalysed reaction is S-(5-deoxy-D-ribos-5-yl)-L-homocysteine = (S)-4,5-dihydroxypentane-2,3-dione + L-homocysteine. Functionally, involved in the synthesis of autoinducer 2 (AI-2) which is secreted by bacteria and is used to communicate both the cell density and the metabolic potential of the environment. The regulation of gene expression in response to changes in cell density is called quorum sensing. Catalyzes the transformation of S-ribosylhomocysteine (RHC) to homocysteine (HC) and 4,5-dihydroxy-2,3-pentadione (DPD). The polypeptide is S-ribosylhomocysteine lyase (Vibrio atlanticus (strain LGP32) (Vibrio splendidus (strain Mel32))).